The chain runs to 418 residues: Creatine kinase U-type, mitochondrial (418 aa).

The transit peptide at 1–39 (MAGPFSRLLSARPGLRLLALAGAGSLTAGILLRPESVGA) directs the protein to the mitochondrion. The segment at 40–64 (AAAERRRLYPPSAEYPDLRKHNNCM) is cardiolipin-binding. Residues 46-132 (RLYPPSAEYP…FDPVIQERHN (87 aa)) enclose the Phosphagen kinase N-terminal domain. The residue at position 152 (Ser-152) is a Phosphoserine. The 243-residue stretch at 159–401 (YVLSSRVRTG…NYLIDCERRL (243 aa)) folds into the Phosphagen kinase C-terminal domain. 162-166 (SSRVR) lines the ATP pocket. Ser-197 carries the post-translational modification Phosphoserine. A Phosphothreonine modification is found at Thr-214. Residue His-225 participates in ATP binding. Phosphoserine is present on Ser-233. Residues Arg-270, Arg-326, and 354 to 359 (RGTGGV) contribute to the ATP site. Position 356 is a phosphothreonine (Thr-356). Ser-366 is modified (phosphoserine). Asp-369 is an ATP binding site.

Belongs to the ATP:guanido phosphotransferase family. Exists as an octamer composed of four MTCK homodimers.

The protein resides in the mitochondrion inner membrane. The catalysed reaction is creatine + ATP = N-phosphocreatine + ADP + H(+). Functionally, reversibly catalyzes the transfer of phosphate between ATP and various phosphogens (e.g. creatine phosphate). Creatine kinase isoenzymes play a central role in energy transduction in tissues with large, fluctuating energy demands, such as skeletal muscle, heart, brain and spermatozoa. The protein is Creatine kinase U-type, mitochondrial (Ckmt1) of Mus musculus (Mouse).